We begin with the raw amino-acid sequence, 285 residues long: Protease HtpX homolog (285 aa).

Transmembrane regions (helical) follow at residues 7–27 (TAML…MIGG) and 30–50 (GMTI…WFSD). Residue His-131 coordinates Zn(2+). Residue Glu-132 is part of the active site. His-135 is a Zn(2+) binding site. 2 helical membrane-spanning segments follow: residues 146–166 (ITAT…FFGG) and 177–197 (IAGI…QMAI). Residue Glu-202 coordinates Zn(2+).

The protein belongs to the peptidase M48B family. Zn(2+) serves as cofactor.

The protein resides in the cell inner membrane. The sequence is that of Protease HtpX homolog from Burkholderia lata (strain ATCC 17760 / DSM 23089 / LMG 22485 / NCIMB 9086 / R18194 / 383).